The following is a 210-amino-acid chain: uncharacterized protein (210 aa).

This is an uncharacterized protein from Mycobacterium bovis (strain ATCC BAA-935 / AF2122/97).